A 178-amino-acid chain; its full sequence is Mediator of RNA polymerase II transcription subunit 28 (178 aa).

Residues 1–25 (MAAPLGGMFSGQQPGPPQPPPGLLG) are disordered. Residues 109 to 145 (QVIKEDVSELRNELQRKDALVQKHLTKLRHWQQVLED) are a coiled coil.

This sequence belongs to the Mediator complex subunit 28 family. As to quaternary structure, component of the Mediator complex, which is composed of MED1, MED4, MED6, MED7, MED8, MED9, MED10, MED11, MED12, MED13, MED13L, MED14, MED15, MED16, MED17, MED18, MED19, MED20, MED21, MED22, MED23, MED24, MED25, MED26, MED27, MED29, MED30, MED31, CCNC, CDK8 and CDC2L6/CDK11. The MED12, MED13, CCNC and CDK8 subunits form a distinct module termed the CDK8 module. Mediator containing the CDK8 module is less active than Mediator lacking this module in supporting transcriptional activation. Individual preparations of the Mediator complex lacking one or more distinct subunits have been variously termed ARC, CRSP, DRIP, PC2, SMCC and TRAP. Forms a ternary complex with NF2/merlin and GRB2. Binds to actin.

The protein localises to the nucleus. It is found in the cytoplasm. The protein resides in the membrane. Its function is as follows. Component of the Mediator complex, a coactivator involved in the regulated transcription of nearly all RNA polymerase II-dependent genes. Mediator functions as a bridge to convey information from gene-specific regulatory proteins to the basal RNA polymerase II transcription machinery. Mediator is recruited to promoters by direct interactions with regulatory proteins and serves as a scaffold for the assembly of a functional preinitiation complex with RNA polymerase II and the general transcription factors. May be part of a complex containing NF2/merlin that participates in cellular signaling to the actin cytoskeleton downstream of tyrosine kinase signaling pathways. This Bos taurus (Bovine) protein is Mediator of RNA polymerase II transcription subunit 28 (MED28).